The primary structure comprises 403 residues: CCA-adding enzyme (403 aa).

Residues Gly-32 and Arg-35 each coordinate ATP. CTP is bound by residues Gly-32 and Arg-35. The Mg(2+) site is built by Asp-45 and Asp-47. ATP-binding residues include Arg-116, Asp-159, Arg-162, Arg-165, and Arg-168. Residues Arg-116, Asp-159, Arg-162, Arg-165, and Arg-168 each contribute to the CTP site.

Belongs to the tRNA nucleotidyltransferase/poly(A) polymerase family. Bacterial CCA-adding enzyme type 3 subfamily. Homodimer. Mg(2+) is required as a cofactor.

The enzyme catalyses a tRNA precursor + 2 CTP + ATP = a tRNA with a 3' CCA end + 3 diphosphate. It catalyses the reaction a tRNA with a 3' CCA end + 2 CTP + ATP = a tRNA with a 3' CCACCA end + 3 diphosphate. In terms of biological role, catalyzes the addition and repair of the essential 3'-terminal CCA sequence in tRNAs without using a nucleic acid template. Adds these three nucleotides in the order of C, C, and A to the tRNA nucleotide-73, using CTP and ATP as substrates and producing inorganic pyrophosphate. tRNA 3'-terminal CCA addition is required both for tRNA processing and repair. Also involved in tRNA surveillance by mediating tandem CCA addition to generate a CCACCA at the 3' terminus of unstable tRNAs. While stable tRNAs receive only 3'-terminal CCA, unstable tRNAs are marked with CCACCA and rapidly degraded. This chain is CCA-adding enzyme, found in Streptococcus uberis (strain ATCC BAA-854 / 0140J).